We begin with the raw amino-acid sequence, 407 residues long: Inactive non-canonical poly(A) RNA polymerase protein Trf4-2 (407 aa).

Mg(2+) contacts are provided by D85 and D87. The region spanning 221–280 is the PAP-associated domain; that stretch reads LALLLIQFLDYYGRKFDFFKYGISVLGQGGCVEKARLRSTLGENNWQSVLCIEDPVTPTN. A disordered region spans residues 354 to 390; sequence LVQPSPTGSTSPSASASASEDERSGGPATIGFGRCDD. Positions 357-371 are enriched in low complexity; sequence PSPTGSTSPSASASA.

The protein belongs to the DNA polymerase type-B-like family.

This Drosophila melanogaster (Fruit fly) protein is Inactive non-canonical poly(A) RNA polymerase protein Trf4-2.